A 603-amino-acid chain; its full sequence is Mitochondrial distribution and morphology protein 34 (603 aa).

The 205-residue stretch at 1–205 (MAFNFNWSPL…SPEYQEIETE (205 aa)) folds into the SMP-LTD domain. The segment covering 320–332 (KSGASSVASGSTG) has biased composition (low complexity). 2 disordered regions span residues 320-511 (KSGA…PLLR) and 558-603 (IARK…AYVA). Residues 333 to 351 (NETLSSRPTLASSYSTSAG) are compositionally biased toward polar residues. A compositionally biased stretch (basic and acidic residues) spans 371 to 380 (VVDLRRKDGA). Residues 383 to 403 (GVSTEANTPLPSTQVSDTSSV) are compositionally biased toward polar residues. Residues 452–463 (PLLAPAPLIPNA) are compositionally biased toward low complexity. The segment covering 500–509 (RQAQQSTSPL) has biased composition (polar residues). Basic and acidic residues predominate over residues 558–570 (IARKVQEEKDKSS).

This sequence belongs to the MDM34 family. In terms of assembly, component of the ER-mitochondria encounter structure (ERMES) or MDM complex, composed of mmm1, mdm10, mdm12 and mdm34.

The protein localises to the mitochondrion outer membrane. Component of the ERMES/MDM complex, which serves as a molecular tether to connect the endoplasmic reticulum (ER) and mitochondria. Components of this complex are involved in the control of mitochondrial shape and protein biogenesis, and function in nonvesicular lipid trafficking between the ER and mitochondria. Mdm34 is required for the interaction of the ER-resident membrane protein mmm1 and the outer mitochondrial membrane-resident beta-barrel protein mdm10. The chain is Mitochondrial distribution and morphology protein 34 from Pyrenophora tritici-repentis (strain Pt-1C-BFP) (Wheat tan spot fungus).